Here is a 384-residue protein sequence, read N- to C-terminus: 5-cytosine rRNA methyltransferase NSUN4 (384 aa).

The N-terminal 25 residues, M1–Q25, are a transit peptide targeting the mitochondrion. S-adenosyl-L-methionine is bound by residues G185, G186, K187, and D204. Residue S206 is modified to Phosphoserine. S-adenosyl-L-methionine is bound by residues R209, D237, G238, and D255. Catalysis depends on C310, which acts as the Nucleophile.

This sequence belongs to the class I-like SAM-binding methyltransferase superfamily. RsmB/NOP family. Heterodimer with MTERFD2/MTERF4; this interaction seems to be required for NSUN4 recruitment to the mitochondrial large ribosomal subunit.

The protein localises to the mitochondrion. It carries out the reaction a cytidine in rRNA + S-adenosyl-L-methionine = a 5-methylcytidine in rRNA + S-adenosyl-L-homocysteine + H(+). It catalyses the reaction a cytidine in mRNA + S-adenosyl-L-methionine = a 5-methylcytidine in mRNA + S-adenosyl-L-homocysteine + H(+). In terms of biological role, mitochondrial RNA cytosine C(5)-methyltransferase that methylates cytosine to 5-methylcytosine (m5C) in various RNAs, such as rRNAs, mRNAs and some long non-coding RNAs (lncRNAs). Involved in mitochondrial ribosome small subunit (SSU) maturation by catalyzing methylation of mitochondrial 12S rRNA; the function is independent of MTERFD2/MTERF4 and assembled mitochondrial ribosome large subunit (LSU). Targeted to LSU by MTERFD2/MTERF4 and probably is involved in a final step in ribosome biogenesis to ensure that SSU and LSU are assembled. In vitro can methylate 16S rRNA of the LSU; the methylation is enhanced by MTERFD/MTERF4. Also acts as a regulator of innate immunity by marking double-stranded mitochondrial RNAs(mt-dsRNAs) generated in response to stress: catalyzes m5C modification on mitochondrial RNAs, such as a mRNAs and lncRNAs, with a preference for the termini of light-strand lncRNAs, promoting their degradation and cytosolic release. Modified light-strand lncRNAs are then recognized by C1QBP reader and recruited to the mitochondrial degradosome complex, which promotes their degradation. The polypeptide is 5-cytosine rRNA methyltransferase NSUN4 (NSUN4) (Bos taurus (Bovine)).